Reading from the N-terminus, the 467-residue chain is UDP-N-acetylmuramate--L-alanine ligase (467 aa).

ATP is bound at residue 123–129 (GTHGKST).

This sequence belongs to the MurCDEF family.

It is found in the cytoplasm. The catalysed reaction is UDP-N-acetyl-alpha-D-muramate + L-alanine + ATP = UDP-N-acetyl-alpha-D-muramoyl-L-alanine + ADP + phosphate + H(+). Its pathway is cell wall biogenesis; peptidoglycan biosynthesis. Functionally, cell wall formation. The sequence is that of UDP-N-acetylmuramate--L-alanine ligase from Arthrobacter sp. (strain FB24).